The following is a 1243-amino-acid chain: Serine/threonine-protein kinase WNK4 (1243 aa).

The span at 1–17 (MLASPATETTVLMSQTE) shows a compositional bias: polar residues. Positions 1-142 (MLASPATETT…GPGSREPLRV (142 aa)) are disordered. Low complexity predominate over residues 65–77 (VDLGLLSSWSLPA). The span at 78 to 103 (SPAPDPPDPPDSAGPGPARSPPPSSK) shows a compositional bias: pro residues. Serine 97 carries the post-translational modification Phosphoserine. Over residues 118–127 (AAEDSARPEL) the composition is skewed to basic and acidic residues. Glycyl lysine isopeptide (Lys-Gly) (interchain with G-Cter in ubiquitin) cross-links involve residues lysine 157 and lysine 175. The 259-residue stretch at 174–432 (LKFDIEIGRG…IQDLLAHAFF (259 aa)) folds into the Protein kinase domain. Serine 184 is a binding site for ATP. Residues lysine 186, lysine 226, and lysine 241 each participate in a glycyl lysine isopeptide (Lys-Gly) (interchain with G-Cter in ubiquitin) cross-link. ATP is bound by residues 254 to 257 (TELM) and lysine 304. The Proton acceptor role is filled by aspartate 321. Lysine 328 is covalently cross-linked (Glycyl lysine isopeptide (Lys-Gly) (interchain with G-Cter in ubiquitin)). Phosphoserine; by autocatalysis occurs at positions 331 and 335. Residues lysine 387, lysine 393, lysine 450, and lysine 454 each participate in a glycyl lysine isopeptide (Lys-Gly) (interchain with G-Cter in ubiquitin) cross-link. The segment at 526–564 (KARELEALPPEPGPPPATVPMAPGPPSVFPPEPEEPEAD) is disordered. Positions 534–556 (PPEPGPPPATVPMAPGPPSVFPP) are enriched in pro residues. An interaction with KLHL3 region spans residues 557–567 (EPEEPEADQHQ). Phosphoserine is present on serine 575. Positions 630–641 (SGPGSDFSPGDS) are enriched in low complexity. Disordered regions lie at residues 630–683 (SGPG…SVSD), 751–871 (DTGP…STPE), and 943–1110 (SPSP…SPVW). Basic residues predominate over residues 663 to 676 (PPGRNLRRRPRSRL). Positions 767-780 (EPAPLPALPVPLPD) are enriched in pro residues. Over residues 797 to 812 (WTAFSTSSSSPGTPLS) the composition is skewed to low complexity. Pro residues predominate over residues 822–843 (PISPGPIFPITSPPCHPSPSPF). Low complexity-rich tracts occupy residues 844-854 (SPISSQVSSNP), 862-871 (PLPFSSSTPE), and 943-952 (SPSPGLLSQS). A compositionally biased stretch (pro residues) spans 953 to 970 (PPAPPSPLPSLPLPPPVA). Lysine 1010 is covalently cross-linked (Glycyl lysine isopeptide (Lys-Gly) (interchain with G-Cter in ubiquitin)). The RFXV motif motif lies at 1016 to 1019 (RFQV). Serine 1035 is modified (phosphoserine). Positions 1065-1077 (ETREALAESDRAA) are enriched in basic and acidic residues. Residues lysine 1144, lysine 1157, and lysine 1158 each participate in a glycyl lysine isopeptide (Lys-Gly) (interchain with G-Cter in ubiquitin) cross-link. The disordered stretch occupies residues 1166–1243 (RLGKQPPPGI…VTFAGDVGRM (78 aa)). Composition is skewed to polar residues over residues 1193 to 1204 (SFPTSRRNSLQR) and 1216 to 1228 (NSLS…SQEQ). Serine 1217 carries the phosphoserine modification.

The protein belongs to the protein kinase superfamily. Ser/Thr protein kinase family. WNK subfamily. In terms of assembly, interacts with the C-terminal region of KCNJ1. Requires Mg(2+) as cofactor. Post-translationally, autophosphorylated at Ser-331 and Ser-335, promoting its activation. Phosphorylated by WNK1 and WNK3. Phosphorylated at Ser-575 in a MAP3K15/ASK3-dependent process in response to osmotic stress or hypotonic low-chloride stimulation. In terms of processing, ubiquitinated by the BCR(KLHL3) complex, leading to its degradation. Also ubiquitinated by the BCR(KLHL2) complex. In terms of tissue distribution, expressed in kidney, colon and skin.

Its subcellular location is the cell junction. It is found in the tight junction. The catalysed reaction is L-seryl-[protein] + ATP = O-phospho-L-seryl-[protein] + ADP + H(+). It catalyses the reaction L-threonyl-[protein] + ATP = O-phospho-L-threonyl-[protein] + ADP + H(+). Activation requires autophosphorylation of Ser-331 and Ser-335. Autophosphorylation and subsequent activation is inhibited by increases in intracellular ionic strength: Cl(-) potently inhibits WNK4 kinase activity via direct binding. Also inhibited by K(+) ions. In terms of biological role, serine/threonine-protein kinase component of the WNK4-SPAK/OSR1 kinase cascade, which acts as a key regulator of ion transport in the distal nephron and blood pressure. The WNK4-SPAK/OSR1 kinase cascade is composed of WNK4, which mediates phosphorylation and activation of downstream kinases OXSR1/OSR1 and STK39/SPAK. Following activation, OXSR1/OSR1 and STK39/SPAK catalyze phosphorylation of ion cotransporters, such as SLC12A1/NKCC2, SLC12A2/NKCC1, SLC12A3/NCC, SLC12A5/KCC2 or SLC12A6/KCC3, regulating their activity. Acts as a molecular switch that regulates the balance between renal salt reabsorption and K(+) secretion by modulating the activities of renal transporters and channels, including the Na-Cl cotransporter SLC12A3/NCC and the K(+) channel, KCNJ1/ROMK. Regulates NaCl reabsorption in the distal nephron by activating the thiazide-sensitive Na-Cl cotransporter SLC12A3/NCC in distal convoluted tubule cells of kidney: activates SLC12A3/NCC in a OXSR1/OSR1- and STK39/SPAK-dependent process. Also acts as a scaffold protein independently of its protein kinase activity: negatively regulates cell membrane localization of various transporters and channels (CFTR, KCNJ1/ROMK, SLC4A4, SLC26A9 and TRPV4) by clathrin-dependent endocytosis. Also inhibits the activity of the epithelial Na(+) channel (ENaC) SCNN1A, SCNN1B, SCNN1D in a inase-independent mechanism. May also phosphorylate NEDD4L. This chain is Serine/threonine-protein kinase WNK4, found in Homo sapiens (Human).